Reading from the N-terminus, the 131-residue chain is Protein FON2 SPARE1 (131 aa).

An N-terminal signal peptide occupies residues 1–22; the sequence is MSRRLGAAAAVLLLWLAVLTFA. A disordered region spans residues 67–131; it reads SPSSLTTTDR…VPTGPNPLHH (65 aa). Basic residues predominate over residues 76-97; sequence RHHHHHRHHGHHHHRGHDRWNR.

Belongs to the CLV3/ESR signal peptide family. As to expression, expressed in all aerial apical meristems, including the floral and inflorescence meristems in the reproductive phase and the shoot apical meristem in the vegetative phase. Also detected in the primordia of lateral organs such as the leaf and the floral organs.

The protein localises to the secreted. Its function is as follows. Involved in the maintenance of the floral meristem and of the shoot apical meristem in the vegetative phase. Suppresses the fon2 mutation and acts independently of FON1. In Oryza sativa subsp. japonica, the protein has a single amino acid substitution at the putative processing site of the signal peptide and is inactive. The polypeptide is Protein FON2 SPARE1 (FOS1) (Oryza sativa subsp. indica (Rice)).